Reading from the N-terminus, the 411-residue chain is Phosphoglycerate kinase (411 aa).

Residues 19–21 (DLN), R34, 57–60 (HQSR), R114, and R154 each bind substrate. ATP contacts are provided by residues E332 and 358–361 (GGHS).

The protein belongs to the phosphoglycerate kinase family. In terms of assembly, monomer.

The protein localises to the cytoplasm. The enzyme catalyses (2R)-3-phosphoglycerate + ATP = (2R)-3-phospho-glyceroyl phosphate + ADP. It functions in the pathway carbohydrate degradation; glycolysis; pyruvate from D-glyceraldehyde 3-phosphate: step 2/5. This chain is Phosphoglycerate kinase, found in Thermococcus kodakarensis (strain ATCC BAA-918 / JCM 12380 / KOD1) (Pyrococcus kodakaraensis (strain KOD1)).